Consider the following 1217-residue polypeptide: DNA-directed RNA polymerase subunit beta' (1217 aa).

Residues C60, C62, C75, and C78 each coordinate Zn(2+). Mg(2+)-binding residues include D449, D451, and D453. Zn(2+) contacts are provided by C821, C895, C902, and C905.

This sequence belongs to the RNA polymerase beta' chain family. The RNAP catalytic core consists of 2 alpha, 1 beta, 1 beta' and 1 omega subunit. When a sigma factor is associated with the core the holoenzyme is formed, which can initiate transcription. Mg(2+) serves as cofactor. It depends on Zn(2+) as a cofactor.

It carries out the reaction RNA(n) + a ribonucleoside 5'-triphosphate = RNA(n+1) + diphosphate. DNA-dependent RNA polymerase catalyzes the transcription of DNA into RNA using the four ribonucleoside triphosphates as substrates. In Lactobacillus acidophilus (strain ATCC 700396 / NCK56 / N2 / NCFM), this protein is DNA-directed RNA polymerase subunit beta'.